The following is a 91-amino-acid chain: Putative regulatory protein Cphy_2880 (91 aa).

Belongs to the RemA family.

The chain is Putative regulatory protein Cphy_2880 from Lachnoclostridium phytofermentans (strain ATCC 700394 / DSM 18823 / ISDg) (Clostridium phytofermentans).